The chain runs to 631 residues: MPRYGASLRQSCPRSGREQGQDGTAGAPGLLWMGLVLALALALALALALSDSRVLWAPAEAHPLSPQGHPARLHRIVPRLRDVFGWGNLTCPICKGLFTAINLGLKKEPNVARVGSVAIKLCNLLKIAPPAVCQSIVHLFEDDMVEVWRRSVLSPSEACGLLLGSTCGHWDIFSSWNISLPTVPKPPPKPPSPPAPGAPVSRILFLTDLHWDHDYLEGTDPDCADPLCCRRGSGLPPASRPGAGYWGEYSKCDLPLRTLESLLSGLGPAGPFDMVYWTGDIPAHDVWHQTRQDQLRALTTVTALVRKFLGPVPVYPAVGNHESTPVNSFPPPFIEGNHSSRWLYEAMAKAWEPWLPAEALRTLRIGGFYALSPYPGLRLISLNMNFCSRENFWLLINSTDPAGQLQWLVGELQAAEDRGDKVHIIGHIPPGHCLKSWSWNYYRIVARYENTLAAQFFGHTHVDEFEVFYDEETLSRPLAVAFLAPSATTYIGLNPGYRVYQIDGNYSGSSHVVLDHETYILNLTQANIPGAIPHWQLLYRARETYGLPNTLPTAWHNLVYRMRGDMQLFQTFWFLYHKGHPPSEPCGTPCRLATLCAQLSARADSPALCRHLMPDGSLPEAQSLWPRPLFC.

A disordered region spans residues 1-23 (MPRYGASLRQSCPRSGREQGQDG). The N-terminal stretch at 1-46 (MPRYGASLRQSCPRSGREQGQDGTAGAPGLLWMGLVLALALALALA) is a signal peptide. A Saposin B-type domain is found at 87 to 171 (GNLTCPICKG…LLGSTCGHWD (85 aa)). The N-linked (GlcNAc...) asparagine glycan is linked to Asn88. Disulfide bonds link Cys91/Cys167, Cys94/Cys159, and Cys122/Cys133. Asn177 carries N-linked (GlcNAc...) asparagine glycosylation. Residues Asp208 and His210 each coordinate Zn(2+). Disulfide bonds link Cys223–Cys228 and Cys229–Cys252. Zn(2+) is bound by residues Asp280 and Asn320. Asn337 and Asn397 each carry an N-linked (GlcNAc...) asparagine glycan. The cysteines at positions 387 and 433 are disulfide-linked. Residues His427, His459, and His461 each contribute to the Zn(2+) site. A glycan (N-linked (GlcNAc...) asparagine) is linked at Asn505. At Ser510 the chain carries Phosphoserine; by PKC/PRKCD. Residue Asn522 is glycosylated (N-linked (GlcNAc...) asparagine). 2 disulfides stabilise this stretch: Cys586/Cys590 and Cys596/Cys609.

This sequence belongs to the acid sphingomyelinase family. In terms of assembly, monomer. Interacts with SORT1; the interaction is required for SMPD1 targeting to lysosomes. It depends on Zn(2+) as a cofactor. Post-translationally, proteolytically processed. Mature lysosomal form arises from C-terminal proteolytic processing of pro-sphingomyelin phosphodiesterase. This form is generated following cleavage by CASP7 in the extracellular milieu. It shows increased activity. In terms of processing, both lysosomal and secreted forms are glycosylated but they show a differential pattern of glycosylation. Post-translationally, phosphorylated at Ser-510 by PRKCD upon stress stimuli. Phosphorylation is required for secretion.

Its subcellular location is the lysosome. The protein localises to the lipid droplet. It is found in the secreted. It localises to the extracellular space. It catalyses the reaction a sphingomyelin + H2O = phosphocholine + an N-acylsphing-4-enine + H(+). The catalysed reaction is N-(octadecanoyl)-sphing-4-enine-1-phosphocholine + H2O = N-octadecanoylsphing-4-enine + phosphocholine + H(+). It carries out the reaction 1,2-dihexadecanoyl-sn-glycero-3-phosphocholine + H2O = 1,2-dihexadecanoyl-sn-glycerol + phosphocholine + H(+). The enzyme catalyses a 1,2-diacyl-sn-glycero-3-phosphocholine + H2O = phosphocholine + a 1,2-diacyl-sn-glycerol + H(+). With respect to regulation, hydrolysis of liposomal sphingomyelin is stimulated by incorporation of diacylglycerol (DAG), ceramide and free fatty acids into the liposomal membranes. Phosphatidylcholine hydrolysis is inhibited by incorporation of cholesterol, ceramide, DAG, monoacylglycerol and fatty acids. Antidepressants, namely amitriptyline, imipramine, desipramine, fluoxetine, sertraline, escitalopram, and maprotiline inhibit sphingomyelin phosphodiesterase activity. (Microbial infection) The secretory form is activated by P.aeruginosa, this activation results in the release of ceramide in the outer leaflet of the plasma membrane. Its activity is regulated as follows. (Microbial infection) The secretory form is activated by human coronavirus SARS-CoV-2, this activation results in the release of ceramide in the outer leaflet of the plasma membrane. In terms of biological role, converts sphingomyelin to ceramide. Exists as two enzymatic forms that arise from alternative trafficking of a single protein precursor, one that is targeted to the endolysosomal compartment, whereas the other is released extracellularly. However, in response to various forms of stress, lysosomal exocytosis may represent a major source of the secretory form. Functionally, in the lysosomes, converts sphingomyelin to ceramide. Plays an important role in the export of cholesterol from the intraendolysosomal membranes. Also has phospholipase C activities toward 1,2-diacylglycerolphosphocholine and 1,2-diacylglycerolphosphoglycerol. Modulates stress-induced apoptosis through the production of ceramide. Its function is as follows. When secreted, modulates cell signaling with its ability to reorganize the plasma membrane by converting sphingomyelin to ceramide. Secreted form is increased in response to stress and inflammatory mediators such as IL1B, IFNG or TNF as well as upon infection with bacteria and viruses. Produces the release of ceramide in the outer leaflet of the plasma membrane playing a central role in host defense. Ceramide reorganizes these rafts into larger signaling platforms that are required to internalize P.aeruginosa, induce apoptosis and regulate the cytokine response in infected cells. In wounded cells, the lysosomal form is released extracellularly in the presence of Ca(2+) and promotes endocytosis and plasma membrane repair. This form is generated following cleavage by CASP7 in the extracellular milieu in response to bacterial infection. It shows increased ability to convert sphingomyelin to ceramide and promotes plasma membrane repair. Plasma membrane repair by ceramide counteracts the action of gasdermin-D (GSDMD) perforin (PRF1) pores that are formed in response to bacterial infection. In terms of biological role, (Microbial infection) Secretion is activated by bacteria such as P.aeruginosa, N.gonorrhoeae and others, this activation results in the release of ceramide in the outer leaflet of the plasma membrane which facilitates the infection. Functionally, (Microbial infection) Secretion is activated by human coronaviruses SARS-CoV and SARS-CoV-2 as well as Zaire ebolavirus, this activation results in the release of ceramide in the outer leaflet of the plasma membrane which facilitates the infection. Its function is as follows. Lacks residues that bind the cofactor Zn(2+) and has no enzyme activity. This Homo sapiens (Human) protein is Sphingomyelin phosphodiesterase.